The chain runs to 608 residues: MFDSKKFLANVTHDPGVYRMFDDKDTVIYVGKAKDLKKRLSSYFRANLSSKKTEALVASICRIETTITTSETEALLLEHNYIKTFQPRYNVLLRDDKSYPYILLTKERHPRITSHRGSKKVTGEYFGPYPHAGAVRETLSLLQKLFPIRQCENSVYANRSRPCLQYQIGRCLAPCVSGYVSDEEYNQQVGYARLFLQGKDQQVLDHLIGKMERASRALNFEEAARYRDQIQAVRSVIEKQFVSNERLDDMDIIAIAYKLGIACVHVLFIRQGKILGNRSYFPKVPENTSLSELTETFVGQFYLQAHQGRTIPNSIIVDRKLEEKAELESLLTDQAGRKVSIQDNIKGNKSKYLHLAQMNAQAALALQLKQSSLIHERYKELQQLLGIEKIHRMECFDISHTMGQQTIASCVVFNEEGPLKSDYRRFNIEGITGGDDYAAMEQALKKRYDKDLELEKIPDIIFIDGGKGQLNRALKVFHELQVKWDKNRPHLIGVAKGVDRKVGLETLIISKQEREINLPADSLALHLIQHIRDESHNHAISGHRKKRQKAFTQSGLETIEGVGAKRRQALLKYLGGMQGVKNATQDEIASVPGISVALAEKIFEALHH.

The GIY-YIG domain occupies 13–91; sequence HDPGVYRMFD…IKTFQPRYNV (79 aa). In terms of domain architecture, UVR spans 201 to 236; sequence QQVLDHLIGKMERASRALNFEEAARYRDQIQAVRSV.

The protein belongs to the UvrC family. In terms of assembly, interacts with UvrB in an incision complex.

The protein resides in the cytoplasm. In terms of biological role, the UvrABC repair system catalyzes the recognition and processing of DNA lesions. UvrC both incises the 5' and 3' sides of the lesion. The N-terminal half is responsible for the 3' incision and the C-terminal half is responsible for the 5' incision. The protein is UvrABC system protein C of Mannheimia succiniciproducens (strain KCTC 0769BP / MBEL55E).